The primary structure comprises 296 residues: Ribosomal RNA small subunit methyltransferase A (296 aa).

S-adenosyl-L-methionine contacts are provided by asparagine 30, leucine 32, glycine 57, glutamate 78, aspartate 103, and asparagine 128.

This sequence belongs to the class I-like SAM-binding methyltransferase superfamily. rRNA adenine N(6)-methyltransferase family. RsmA subfamily.

The protein resides in the cytoplasm. The enzyme catalyses adenosine(1518)/adenosine(1519) in 16S rRNA + 4 S-adenosyl-L-methionine = N(6)-dimethyladenosine(1518)/N(6)-dimethyladenosine(1519) in 16S rRNA + 4 S-adenosyl-L-homocysteine + 4 H(+). Specifically dimethylates two adjacent adenosines (A1518 and A1519) in the loop of a conserved hairpin near the 3'-end of 16S rRNA in the 30S particle. May play a critical role in biogenesis of 30S subunits. This is Ribosomal RNA small subunit methyltransferase A from Staphylococcus epidermidis (strain ATCC 35984 / DSM 28319 / BCRC 17069 / CCUG 31568 / BM 3577 / RP62A).